The primary structure comprises 468 residues: Argininosuccinate lyase (468 aa).

Belongs to the lyase 1 family. Argininosuccinate lyase subfamily.

It is found in the cytoplasm. It catalyses the reaction 2-(N(omega)-L-arginino)succinate = fumarate + L-arginine. The protein operates within amino-acid biosynthesis; L-arginine biosynthesis; L-arginine from L-ornithine and carbamoyl phosphate: step 3/3. This Alkalilimnicola ehrlichii (strain ATCC BAA-1101 / DSM 17681 / MLHE-1) protein is Argininosuccinate lyase.